Consider the following 171-residue polypeptide: Co-chaperone protein HscB homolog (171 aa).

The J domain maps to 2-74; the sequence is NHFELFGLPP…ISRAEYLLSQ (73 aa).

It belongs to the HscB family. In terms of assembly, interacts with HscA and stimulates its ATPase activity.

Co-chaperone involved in the maturation of iron-sulfur cluster-containing proteins. Seems to help targeting proteins to be folded toward HscA. In Vibrio vulnificus (strain YJ016), this protein is Co-chaperone protein HscB homolog.